The following is a 225-amino-acid chain: Biosynthetic peptidoglycan transglycosylase (225 aa).

The helical transmembrane segment at 8–28 threads the bilayer; it reads VLLIFIGAILLIQLWIFSSLV.

The protein belongs to the glycosyltransferase 51 family.

It is found in the cell inner membrane. The catalysed reaction is [GlcNAc-(1-&gt;4)-Mur2Ac(oyl-L-Ala-gamma-D-Glu-L-Lys-D-Ala-D-Ala)](n)-di-trans,octa-cis-undecaprenyl diphosphate + beta-D-GlcNAc-(1-&gt;4)-Mur2Ac(oyl-L-Ala-gamma-D-Glu-L-Lys-D-Ala-D-Ala)-di-trans,octa-cis-undecaprenyl diphosphate = [GlcNAc-(1-&gt;4)-Mur2Ac(oyl-L-Ala-gamma-D-Glu-L-Lys-D-Ala-D-Ala)](n+1)-di-trans,octa-cis-undecaprenyl diphosphate + di-trans,octa-cis-undecaprenyl diphosphate + H(+). Its pathway is cell wall biogenesis; peptidoglycan biosynthesis. In terms of biological role, peptidoglycan polymerase that catalyzes glycan chain elongation from lipid-linked precursors. In Acinetobacter baumannii (strain AB307-0294), this protein is Biosynthetic peptidoglycan transglycosylase.